The chain runs to 729 residues: Phosphoribosylformylglycinamidine synthase subunit PurL (729 aa).

Histidine 54 is an active-site residue. Positions 57 and 96 each coordinate ATP. Position 98 (glutamate 98) interacts with Mg(2+). Residues 99-102 (SHNH) and arginine 121 each bind substrate. The active-site Proton acceptor is the histidine 100. Aspartate 122 serves as a coordination point for Mg(2+). Glutamine 245 contributes to the substrate binding site. Residue aspartate 273 participates in Mg(2+) binding. A substrate-binding site is contributed by 317 to 319 (ETQ). ATP-binding residues include aspartate 495 and glycine 532. Asparagine 533 contacts Mg(2+). Serine 535 serves as a coordination point for substrate.

Belongs to the FGAMS family. Monomer. Part of the FGAM synthase complex composed of 1 PurL, 1 PurQ and 2 PurS subunits.

The protein resides in the cytoplasm. It catalyses the reaction N(2)-formyl-N(1)-(5-phospho-beta-D-ribosyl)glycinamide + L-glutamine + ATP + H2O = 2-formamido-N(1)-(5-O-phospho-beta-D-ribosyl)acetamidine + L-glutamate + ADP + phosphate + H(+). It functions in the pathway purine metabolism; IMP biosynthesis via de novo pathway; 5-amino-1-(5-phospho-D-ribosyl)imidazole from N(2)-formyl-N(1)-(5-phospho-D-ribosyl)glycinamide: step 1/2. Part of the phosphoribosylformylglycinamidine synthase complex involved in the purines biosynthetic pathway. Catalyzes the ATP-dependent conversion of formylglycinamide ribonucleotide (FGAR) and glutamine to yield formylglycinamidine ribonucleotide (FGAM) and glutamate. The FGAM synthase complex is composed of three subunits. PurQ produces an ammonia molecule by converting glutamine to glutamate. PurL transfers the ammonia molecule to FGAR to form FGAM in an ATP-dependent manner. PurS interacts with PurQ and PurL and is thought to assist in the transfer of the ammonia molecule from PurQ to PurL. The protein is Phosphoribosylformylglycinamidine synthase subunit PurL of Staphylococcus haemolyticus (strain JCSC1435).